We begin with the raw amino-acid sequence, 383 residues long: S-adenosylmethionine synthase (383 aa).

Residue His-15 coordinates ATP. Residue Asp-17 participates in Mg(2+) binding. Glu-43 contacts K(+). Glu-56 and Gln-99 together coordinate L-methionine. The flexible loop stretch occupies residues 99–109; that stretch reads QSPDINQGVDR. Residues 164 to 166, 230 to 231, Asp-239, 245 to 246, Ala-262, and Lys-266 contribute to the ATP site; these read DAK, RF, and RK. Asp-239 is an L-methionine binding site. L-methionine is bound at residue Lys-270.

It belongs to the AdoMet synthase family. As to quaternary structure, homotetramer; dimer of dimers. Requires Mg(2+) as cofactor. The cofactor is K(+).

It is found in the cytoplasm. The enzyme catalyses L-methionine + ATP + H2O = S-adenosyl-L-methionine + phosphate + diphosphate. It participates in amino-acid biosynthesis; S-adenosyl-L-methionine biosynthesis; S-adenosyl-L-methionine from L-methionine: step 1/1. Its function is as follows. Catalyzes the formation of S-adenosylmethionine (AdoMet) from methionine and ATP. The overall synthetic reaction is composed of two sequential steps, AdoMet formation and the subsequent tripolyphosphate hydrolysis which occurs prior to release of AdoMet from the enzyme. The polypeptide is S-adenosylmethionine synthase (Pectobacterium carotovorum subsp. carotovorum (strain PC1)).